A 129-amino-acid polypeptide reads, in one-letter code: Small ribosomal subunit protein uS11 (129 aa).

The protein belongs to the universal ribosomal protein uS11 family. As to quaternary structure, part of the 30S ribosomal subunit. Interacts with proteins S7 and S18. Binds to IF-3.

In terms of biological role, located on the platform of the 30S subunit, it bridges several disparate RNA helices of the 16S rRNA. Forms part of the Shine-Dalgarno cleft in the 70S ribosome. In Francisella tularensis subsp. mediasiatica (strain FSC147), this protein is Small ribosomal subunit protein uS11.